The chain runs to 144 residues: Large ribosomal subunit protein uL16 (144 aa).

The protein belongs to the universal ribosomal protein uL16 family. Part of the 50S ribosomal subunit.

In terms of biological role, binds 23S rRNA and is also seen to make contacts with the A and possibly P site tRNAs. The chain is Large ribosomal subunit protein uL16 from Clostridium perfringens (strain ATCC 13124 / DSM 756 / JCM 1290 / NCIMB 6125 / NCTC 8237 / Type A).